The primary structure comprises 251 residues: Triosephosphate isomerase (251 aa).

9 to 11 lines the substrate pocket; it reads NWK. His-94 acts as the Electrophile in catalysis. The active-site Proton acceptor is the Glu-166. Substrate is bound by residues Gly-172, Ser-211, and 232-233; that span reads GG.

The protein belongs to the triosephosphate isomerase family. In terms of assembly, homodimer.

Its subcellular location is the cytoplasm. It catalyses the reaction D-glyceraldehyde 3-phosphate = dihydroxyacetone phosphate. The protein operates within carbohydrate biosynthesis; gluconeogenesis. Its pathway is carbohydrate degradation; glycolysis; D-glyceraldehyde 3-phosphate from glycerone phosphate: step 1/1. Its function is as follows. Involved in the gluconeogenesis. Catalyzes stereospecifically the conversion of dihydroxyacetone phosphate (DHAP) to D-glyceraldehyde-3-phosphate (G3P). This is Triosephosphate isomerase from Stenotrophomonas maltophilia (strain R551-3).